The following is a 78-amino-acid chain: Small ribosomal subunit protein bS20 (78 aa).

It belongs to the bacterial ribosomal protein bS20 family.

Binds directly to 16S ribosomal RNA. This Streptococcus pneumoniae serotype 4 (strain ATCC BAA-334 / TIGR4) protein is Small ribosomal subunit protein bS20.